The primary structure comprises 663 residues: MSWLSSSQGVVLTAYHPSGKDQTVGNSHAKAGEEATSSRRYGQYTMNQESTTIKVMEKPPFDRSISQDSLDELSMEDYWIELENIKKSSENSQEDQEVVVVKEPDEGELEEEWLKEAGLSNLFGESAGDPQESIVFLSTLTRTQAAAVQKRVETVSQTLRKKNKQYQIPDVRDIFAQQRESKETAPGGTESQSLRTNENKYQGRDDEASNLVGEEKLIPPEETPAPETDINLEVSFAEQALNQKESSKEKIQKSKGDDATLPSFRLPKDKTGTTRIGDLAPQDMKKVCHLALIELTALYDVLGIELKQQKAVKIKTKDSGLFCVPLTALLEQDQRKVPGMRIPLIFQKLISRIEERGLETEGLLRIPGAAIRIKNLCQELEAKFYEGTFNWESVKQHDAASLLKLFIRELPQPLLSVEYLKAFQAVQNLPTKKQQLQALNLLVILLPDANRDTLKALLEFLQRVIDNKEKNKMTVMNVAMVMAPNLFMCHALGLKSSEQREFVMAAGTANTMHLLIKYQKLLWTIPKFIVNQVRKQNTENHKKDKRAMKKLLKKMAYDREKYEKQDKSTNDADVPQGVIRVQAPHLSKVSMAIQLTEELKASDVLARFLSQESGVAQTLKKGEVFLYEIGGNIGERCLDDDTYMKDLYQLNPNAEWVIKSKPL.

Residues 15–37 (YHPSGKDQTVGNSHAKAGEEATS) are disordered. Ser-66 and Ser-69 each carry phosphoserine. At Thr-158 the chain carries Phosphothreonine. Disordered stretches follow at residues 179–227 (RESK…PAPE) and 243–277 (QKESSKEKIQKSKGDDATLPSFRLPKDKTGTTRIG). Composition is skewed to basic and acidic residues over residues 197-219 (NENKYQGRDDEASNLVGEEKLIP) and 245-258 (ESSKEKIQKSKGDD). At Ser-263 the chain carries Phosphoserine. A Rho-GAP domain is found at 324-523 (VPLTALLEQD…LLIKYQKLLW (200 aa)). A Phosphoserine modification is found at Ser-610.

As to quaternary structure, interacts with MPHOSPH6.

The protein resides in the cytoplasm. Functionally, rho GTPase activating protein that suppresses F-actin polymerization by inhibiting Rho. Rho GTPase activating proteins act by converting Rho-type GTPases to an inactive GDP-bound state. Plays a key role in tissue tension and 3D tissue shape by regulating cortical actomyosin network formation. Acts downstream of YAP1 and inhibits actin polymerization, which in turn reduces nuclear localization of YAP1. Regulates cell shape, spreading, and migration. The protein is Rho GTPase-activating protein 18 of Homo sapiens (Human).